A 173-amino-acid polypeptide reads, in one-letter code: Inorganic pyrophosphatase (173 aa).

3 residues coordinate substrate: lysine 26, arginine 40, and tyrosine 52. Mg(2+)-binding residues include aspartate 62, aspartate 67, and aspartate 99. Residue tyrosine 138 coordinates substrate.

The protein belongs to the PPase family. In terms of assembly, homohexamer. It depends on Mg(2+) as a cofactor.

Its subcellular location is the cytoplasm. It catalyses the reaction diphosphate + H2O = 2 phosphate + H(+). Its function is as follows. Catalyzes the hydrolysis of inorganic pyrophosphate (PPi) forming two phosphate ions. The chain is Inorganic pyrophosphatase from Sulfolobus acidocaldarius (strain ATCC 33909 / DSM 639 / JCM 8929 / NBRC 15157 / NCIMB 11770).